The primary structure comprises 378 residues: Succinate--CoA ligase [ADP-forming] subunit beta (378 aa).

Positions 9-237 (RDIVARYGIP…IAGEPESEIK (229 aa)) constitute an ATP-grasp domain. ATP contacts are provided by residues Lys45, 52-54 (GRG), Ile94, and Glu99. Mg(2+)-binding residues include Asn192 and Asp206. Residues Asn257 and 314–316 (GIT) each bind substrate.

This sequence belongs to the succinate/malate CoA ligase beta subunit family. Heterotetramer of two alpha and two beta subunits. Requires Mg(2+) as cofactor.

The catalysed reaction is succinate + ATP + CoA = succinyl-CoA + ADP + phosphate. The enzyme catalyses GTP + succinate + CoA = succinyl-CoA + GDP + phosphate. Its pathway is carbohydrate metabolism; tricarboxylic acid cycle; succinate from succinyl-CoA (ligase route): step 1/1. Succinyl-CoA synthetase functions in the citric acid cycle (TCA), coupling the hydrolysis of succinyl-CoA to the synthesis of either ATP or GTP and thus represents the only step of substrate-level phosphorylation in the TCA. The beta subunit provides nucleotide specificity of the enzyme and binds the substrate succinate, while the binding sites for coenzyme A and phosphate are found in the alpha subunit. The polypeptide is Succinate--CoA ligase [ADP-forming] subunit beta (Herpetosiphon aurantiacus (strain ATCC 23779 / DSM 785 / 114-95)).